The following is a 218-amino-acid chain: Thiopurine S-methyltransferase (218 aa).

S-adenosyl-L-methionine contacts are provided by Trp10, Leu45, Glu66, and Arg123.

It belongs to the class I-like SAM-binding methyltransferase superfamily. TPMT family.

It is found in the cytoplasm. It carries out the reaction S-adenosyl-L-methionine + a thiopurine = S-adenosyl-L-homocysteine + a thiopurine S-methylether.. The protein is Thiopurine S-methyltransferase of Xanthomonas axonopodis pv. citri (strain 306).